A 170-amino-acid polypeptide reads, in one-letter code: Urease accessory protein UreE (170 aa).

This sequence belongs to the UreE family.

Its subcellular location is the cytoplasm. Involved in urease metallocenter assembly. Binds nickel. Probably functions as a nickel donor during metallocenter assembly. This chain is Urease accessory protein UreE, found in Helicobacter pylori (strain ATCC 700392 / 26695) (Campylobacter pylori).